The primary structure comprises 408 residues: Peptidase T (408 aa).

Histidine 78 contacts Zn(2+). Aspartate 80 is an active-site residue. Zn(2+) is bound at residue aspartate 140. The active-site Proton acceptor is glutamate 174. Glutamate 175, aspartate 197, and histidine 379 together coordinate Zn(2+).

It belongs to the peptidase M20B family. Zn(2+) is required as a cofactor.

It localises to the cytoplasm. The enzyme catalyses Release of the N-terminal residue from a tripeptide.. Cleaves the N-terminal amino acid of tripeptides. This Staphylococcus aureus (strain MRSA252) protein is Peptidase T.